We begin with the raw amino-acid sequence, 354 residues long: MTELKNDRYLRALLRQPVDVTPVWMMRQAGRYLPEYKATRAQAGDFMSLCKNAELACEVTLQPLRRYPLDAAILFSDILTVPDAMGLGLYFEAGEGPRFTSPVTCKADVDKLPIPDPEDELGYVMNAVRTIRRELKGEVPLIGFSGSPWTLATYMVEGGSSKAFTVIKKMMYADPQALHALLDKLAKSVTLYLNAQIKAGAQAVMIFDTWGGVLTGRDYQQFSLYYMHKIVDGLVRENDGRRVPVTLFTKGGGQWLEAMAETGCDALGLDWTTDIADARRRVGNKVALQGNMDPSMLYAPPARIEEEVATILAGFGHGEGHVFNLGHGIHQDVPPEHAGVFVEAVHRLSEQYHR.

Residues 27–31, D77, Y154, T209, and H327 each bind substrate; that span reads RQAGR.

It belongs to the uroporphyrinogen decarboxylase family. Homodimer.

The protein resides in the cytoplasm. The enzyme catalyses uroporphyrinogen III + 4 H(+) = coproporphyrinogen III + 4 CO2. The protein operates within porphyrin-containing compound metabolism; protoporphyrin-IX biosynthesis; coproporphyrinogen-III from 5-aminolevulinate: step 4/4. Functionally, catalyzes the decarboxylation of four acetate groups of uroporphyrinogen-III to yield coproporphyrinogen-III. The sequence is that of Uroporphyrinogen decarboxylase from Escherichia coli (strain 55989 / EAEC).